The primary structure comprises 180 residues: Large ribosomal subunit protein uL5 (180 aa).

Belongs to the universal ribosomal protein uL5 family. As to quaternary structure, part of the 50S ribosomal subunit; part of the 5S rRNA/L5/L18/L25 subcomplex. Contacts the 5S rRNA and the P site tRNA. Forms a bridge to the 30S subunit in the 70S ribosome.

Its function is as follows. This is one of the proteins that bind and probably mediate the attachment of the 5S RNA into the large ribosomal subunit, where it forms part of the central protuberance. In the 70S ribosome it contacts protein S13 of the 30S subunit (bridge B1b), connecting the 2 subunits; this bridge is implicated in subunit movement. Contacts the P site tRNA; the 5S rRNA and some of its associated proteins might help stabilize positioning of ribosome-bound tRNAs. The polypeptide is Large ribosomal subunit protein uL5 (Cupriavidus metallidurans (strain ATCC 43123 / DSM 2839 / NBRC 102507 / CH34) (Ralstonia metallidurans)).